A 541-amino-acid polypeptide reads, in one-letter code: Glutamyl-tRNA(Gln) amidotransferase subunit A, chloroplastic/mitochondrial (541 aa).

Catalysis depends on charge relay system residues K121 and S196. The Acyl-ester intermediate role is filled by S220.

The protein belongs to the amidase family. GatA subfamily. In terms of assembly, subunit of the heterotrimeric GatCAB amidotransferase (AdT) complex, composed of A, B and C subunits.

Its subcellular location is the mitochondrion. It is found in the plastid. It localises to the chloroplast stroma. It catalyses the reaction L-glutamyl-tRNA(Gln) + L-glutamine + ATP + H2O = L-glutaminyl-tRNA(Gln) + L-glutamate + ADP + phosphate + H(+). In terms of biological role, allows the formation of correctly charged Gln-tRNA(Gln) through the transamidation of misacylated Glu-tRNA(Gln) in chloroplasts and mitochondria. The reaction takes place in the presence of glutamine and ATP through an activated gamma-phospho-Glu-tRNA(Gln). The protein is Glutamyl-tRNA(Gln) amidotransferase subunit A, chloroplastic/mitochondrial of Sorghum bicolor (Sorghum).